The chain runs to 44 residues: Thymosin beta-4 (44 aa).

Positions 1–44 (MSDKPDMGEIQKFNKSKLKKTETQEKNPLPSKETIEQEKQAGES) are disordered. S2 carries the post-translational modification N-acetylserine. S2 bears the Phosphoserine mark. Position 4 is an N6-acetyllysine (K4). An N6-acetyllysine; alternate modification is found at K12. K12 participates in a covalent cross-link: Glycyl lysine isopeptide (Lys-Gly) (interchain with G-Cter in SUMO2); alternate. The residue at position 23 (T23) is a Phosphothreonine. K26 bears the N6-acetyllysine mark. S31 carries the phosphoserine modification. K32 carries the N6-acetyllysine modification. Positions 33 to 44 (ETIEQEKQAGES) are enriched in basic and acidic residues. The residue at position 34 (T34) is a Phosphothreonine. The residue at position 39 (K39) is an N6-acetyllysine.

This sequence belongs to the thymosin beta family. As to quaternary structure, identified in a complex composed of ACTA1, COBL, GSN AND TMSB4X. Interacts with SERPINB1. AcSDKP is inactivated by ACE, which removes the dipeptide Lys-Pro from its C-terminus.

The protein resides in the cytoplasm. The protein localises to the cytoskeleton. In terms of biological role, plays an important role in the organization of the cytoskeleton. Binds to and sequesters actin monomers (G actin) and therefore inhibits actin polymerization. Functionally, potent inhibitor of bone marrow derived stem cell differentiation. Acts by inhibits the entry of hematopoietic pluripotent stem cells into the S-phase. In Notamacropus eugenii (Tammar wallaby), this protein is Thymosin beta-4 (TMSB4).